The chain runs to 92 residues: Probable Fe(2+)-trafficking protein (92 aa).

This sequence belongs to the Fe(2+)-trafficking protein family.

In terms of biological role, could be a mediator in iron transactions between iron acquisition and iron-requiring processes, such as synthesis and/or repair of Fe-S clusters in biosynthetic enzymes. The protein is Probable Fe(2+)-trafficking protein of Shewanella oneidensis (strain ATCC 700550 / JCM 31522 / CIP 106686 / LMG 19005 / NCIMB 14063 / MR-1).